The sequence spans 373 residues: tRNA-specific 2-thiouridylase MnmA (373 aa).

Residues 12 to 19 (GMSGGVDS) and M38 contribute to the ATP site. The interaction with target base in tRNA stretch occupies residues 98 to 100 (NPD). The active-site Nucleophile is C103. C103 and C200 are joined by a disulfide. G127 provides a ligand contact to ATP. The segment at 150 to 152 (KDQ) is interaction with tRNA. Residue C200 is the Cysteine persulfide intermediate of the active site. Positions 312–313 (RY) are interaction with tRNA.

It belongs to the MnmA/TRMU family.

The protein resides in the cytoplasm. It catalyses the reaction S-sulfanyl-L-cysteinyl-[protein] + uridine(34) in tRNA + AH2 + ATP = 2-thiouridine(34) in tRNA + L-cysteinyl-[protein] + A + AMP + diphosphate + H(+). Functionally, catalyzes the 2-thiolation of uridine at the wobble position (U34) of tRNA, leading to the formation of s(2)U34. This is tRNA-specific 2-thiouridylase MnmA from Streptococcus mutans serotype c (strain ATCC 700610 / UA159).